A 168-amino-acid polypeptide reads, in one-letter code: Translationally-controlled tumor protein homolog (168 aa).

Residues 1–168 enclose the TCTP domain; it reads MLLYKDVISG…FKDGLVSEKF (168 aa). At serine 78 the chain carries Phosphoserine.

This sequence belongs to the TCTP family.

The protein resides in the cytoplasm. Functionally, involved in calcium binding and microtubule stabilization. May be a guanine nucleotide-free chaperone (GFC). In Schizosaccharomyces pombe (strain 972 / ATCC 24843) (Fission yeast), this protein is Translationally-controlled tumor protein homolog (p23fy).